The primary structure comprises 561 residues: Acylcarnitine hydrolase (561 aa).

The N-terminal stretch at 1–26 (MARKQPHSWLNAVLFGLLLILIHVWG) is a signal peptide. An intrachain disulfide couples Cys-97 to Cys-125. Ser-230 functions as the Acyl-ester intermediate in the catalytic mechanism. The cysteines at positions 282 and 293 are disulfide-linked. Residues Glu-347 and His-459 each act as charge relay system in the active site.

It belongs to the type-B carboxylesterase/lipase family. As to expression, expressed in liver, stomach and kidney.

The protein localises to the microsome. Its subcellular location is the endoplasmic reticulum. The enzyme catalyses all-trans-retinyl hexadecanoate + H2O = all-trans-retinol + hexadecanoate + H(+). The catalysed reaction is an O-acyl-(R)-carnitine + H2O = (R)-carnitine + a fatty acid + H(+). Its function is as follows. Hydrolase with high activity towards palmitoylcarnitine. Is also active with p-nitrophenylacetate and alpha-naphthylacetate. May also hydrolyze retinyl esters. This chain is Acylcarnitine hydrolase, found in Rattus norvegicus (Rat).